The following is an 88-amino-acid chain: Small ribosomal subunit protein bS20 (88 aa).

Belongs to the bacterial ribosomal protein bS20 family.

Functionally, binds directly to 16S ribosomal RNA. The chain is Small ribosomal subunit protein bS20 from Desulforamulus reducens (strain ATCC BAA-1160 / DSM 100696 / MI-1) (Desulfotomaculum reducens).